The following is a 757-amino-acid chain: MDVNPTLLFLKVPAQNAISTTFPYTGDPPYSHGTGTGYTMDTVNRTHQYSEKGRWTTNTETGAPQLNPIDGPLPEDNEPSGYAQTDCVLEVMAFLEESHPGIFENSCIETMEVVQQTRVDKLTQGRQTYDWTLNRNQPAATALANTIEVFRSNGLTANESGRLIDFLKDVMESMNKEEMGITTHFQRKRRVRDNMTKKMITQRTMGKKKQRLNKRSYLIRALTLNTMTKDAERGKLKRRAIATPGMQIRGFVYFVETLARSICEKLEQSGLPVGGNEKKAKLANVVRKMMTNSQDTELSFTITGDNTKWNENQNPRMFLAMITYMTRNQPEWFRNVLSIAPIMFSNKMARLGKGYMFESKSMKLRTQIPAEMLASIDLKYFNDSTRKKIEKIRPLLIEGTASLSPGMMMGMFNMLSTVLGVSILNLGQKRYTKTTYWWDGLQSSDDFALIVNAPNHEGIQAGVDRFYRTCKLLGINMSKKKSYINRTGTFEFTSFFYRYGFVANFSMELPSFGVSGINESADMSIGVTVIKNNMINNDLGPATAQMALQLFIKDYRYTYRCHRGDTQIQTRRSFEIKKLWEQTRSKAGLLVSDGGPNLYNIRNLHIPEVCLKWELMDEDYQGRLCNPLNPFVSHKEIESMNNAVMMPAHGPAKNMEYDAVATTHSWIPKRNRSILNTSQRGVLGDEQMYQRCCNLFEKFFPSSSYRRPVGISSMVEAMVSRARIDARIDFESGRIKKEEFTEIMKICSTIEELRRQK.

A disordered region spans residues 53–82 (GRWTTNTETGAPQLNPIDGPLPEDNEPSGY). A compositionally biased stretch (polar residues) spans 55 to 64 (WTTNTETGAP). 2 consecutive short sequence motifs (nuclear localization signal) follow at residues 187–195 (RKRRVRDNM) and 203–216 (RTMG…NKRS). The interval 249-256 (RGFVYFVE) is promoter-binding site. Residues 286 to 483 (VRKMMTNSQD…GINMSKKKSY (198 aa)) enclose the RdRp catalytic domain.

It belongs to the influenza viruses polymerase PB1 family. As to quaternary structure, influenza RNA polymerase is composed of three subunits: PB1, PB2 and PA. Interacts (via N-terminus) with PA (via C-terminus). Interacts (via C-terminus) with PB2 (via N-terminus); this interaction is essential for transcription initiation. Phosphorylated by host PRKCA.

The protein resides in the host nucleus. It localises to the host cytoplasm. The enzyme catalyses RNA(n) + a ribonucleoside 5'-triphosphate = RNA(n+1) + diphosphate. RNA-dependent RNA polymerase which is responsible for replication and transcription of virus RNA segments. The transcription of viral mRNAs occurs by a unique mechanism called cap-snatching. 5' methylated caps of cellular mRNAs are cleaved after 10-13 nucleotides by PA. In turn, these short capped RNAs are used as primers by PB1 for transcription of viral mRNAs. During virus replication, PB1 initiates RNA synthesis and copy vRNA into complementary RNA (cRNA) which in turn serves as a template for the production of more vRNAs. The polypeptide is RNA-directed RNA polymerase catalytic subunit (Aves (whales)).